The following is a 318-amino-acid chain: Ornithine carbamoyltransferase (318 aa).

Carbamoyl phosphate-binding positions include 63–66 (STRT), glutamine 90, arginine 114, and 141–144 (HPCQ). L-ornithine is bound by residues asparagine 172, aspartate 235, and 239 to 240 (SM). Carbamoyl phosphate is bound by residues 275 to 276 (CL) and arginine 303.

This sequence belongs to the aspartate/ornithine carbamoyltransferase superfamily. OTCase family.

The protein resides in the cytoplasm. The enzyme catalyses carbamoyl phosphate + L-ornithine = L-citrulline + phosphate + H(+). Its pathway is amino-acid biosynthesis; L-arginine biosynthesis; L-arginine from L-ornithine and carbamoyl phosphate: step 1/3. Reversibly catalyzes the transfer of the carbamoyl group from carbamoyl phosphate (CP) to the N(epsilon) atom of ornithine (ORN) to produce L-citrulline. The sequence is that of Ornithine carbamoyltransferase from Prochlorococcus marinus (strain SARG / CCMP1375 / SS120).